The sequence spans 125 residues: Fluoride-specific ion channel FluC (125 aa).

A run of 4 helical transmembrane segments spans residues 5 to 25, 33 to 53, 66 to 86, and 100 to 120; these read IFLV…VSLL, IFPL…GILV, VKIF…SFSL, and LVLY…LGYI. 2 residues coordinate Na(+): G76 and T79.

Belongs to the fluoride channel Fluc/FEX (TC 1.A.43) family.

It localises to the cell inner membrane. It catalyses the reaction fluoride(in) = fluoride(out). Its activity is regulated as follows. Na(+) is not transported, but it plays an essential structural role and its presence is essential for fluoride channel function. Its function is as follows. Fluoride-specific ion channel. Important for reducing fluoride concentration in the cell, thus reducing its toxicity. This Azobacteroides pseudotrichonymphae genomovar. CFP2 protein is Fluoride-specific ion channel FluC.